A 122-amino-acid polypeptide reads, in one-letter code: Large ribosomal subunit protein uL14 (122 aa).

Belongs to the universal ribosomal protein uL14 family. Part of the 50S ribosomal subunit. Forms a cluster with proteins L3 and L19. In the 70S ribosome, L14 and L19 interact and together make contacts with the 16S rRNA in bridges B5 and B8.

Its function is as follows. Binds to 23S rRNA. Forms part of two intersubunit bridges in the 70S ribosome. This is Large ribosomal subunit protein uL14 from Pseudomonas savastanoi pv. phaseolicola (strain 1448A / Race 6) (Pseudomonas syringae pv. phaseolicola (strain 1448A / Race 6)).